We begin with the raw amino-acid sequence, 126 residues long: Fluoride-specific ion channel FluC (126 aa).

A run of 4 helical transmembrane segments spans residues 4-24, 33-53, 67-87, and 97-117; these read PLLS…FLGL, IPLG…FAMA, FVIT…IEIV, and MAML…CLGL. Na(+) contacts are provided by Gly74 and Thr77.

It belongs to the fluoride channel Fluc/FEX (TC 1.A.43) family.

It is found in the cell inner membrane. The catalysed reaction is fluoride(in) = fluoride(out). Na(+) is not transported, but it plays an essential structural role and its presence is essential for fluoride channel function. Its function is as follows. Fluoride-specific ion channel. Important for reducing fluoride concentration in the cell, thus reducing its toxicity. This chain is Fluoride-specific ion channel FluC, found in Acinetobacter baumannii (strain AB307-0294).